The chain runs to 165 residues: Large ribosomal subunit protein uL10 (165 aa).

Belongs to the universal ribosomal protein uL10 family. Part of the ribosomal stalk of the 50S ribosomal subunit. The N-terminus interacts with L11 and the large rRNA to form the base of the stalk. The C-terminus forms an elongated spine to which L12 dimers bind in a sequential fashion forming a multimeric L10(L12)X complex.

In terms of biological role, forms part of the ribosomal stalk, playing a central role in the interaction of the ribosome with GTP-bound translation factors. This chain is Large ribosomal subunit protein uL10, found in Dechloromonas aromatica (strain RCB).